The following is a 644-amino-acid chain: Pesticidal crystal protein Cry3Aa (644 aa).

The span at 1-13 (MNPNNRSEHDTIK) shows a compositional bias: basic and acidic residues. Residues 1 to 20 (MNPNNRSEHDTIKTTENNEV) are disordered. A propeptide spans 1–57 (MNPNNRSEHDTIKTTENNEVPTNHVQYPLAETPNPTLEDLNYKEFLRMTADNNTEAL) (removed in mature form).

This sequence belongs to the delta endotoxin family.

Promotes colloidosmotic lysis by binding to the midgut epithelial cells of Coleoptera. This is Pesticidal crystal protein Cry3Aa (cry3Aa) from Bacillus thuringiensis subsp. san diego.